The following is a 404-amino-acid chain: Multidrug resistance protein MdtG (404 aa).

Helical transmembrane passes span 19–39 (LGCF…PLYV), 56–76 (LVFS…GGLA), 90–110 (LGMA…QFLI), 113–133 (ALLG…ATQV), 144–164 (TLST…GLLA), 171–191 (PVFF…FFFI), 222–242 (LFVT…ILTL), 254–274 (IAFI…LSAP), 288–308 (ILIV…FVQT), 317–337 (FLLG…LVYN), and 376–396 (AVFC…WNSL).

The protein belongs to the major facilitator superfamily. DHA1 family. MdtG (TC 2.A.1.2.20) subfamily.

The protein resides in the cell inner membrane. In Salmonella arizonae (strain ATCC BAA-731 / CDC346-86 / RSK2980), this protein is Multidrug resistance protein MdtG.